Consider the following 145-residue polypeptide: D-aminoacyl-tRNA deacylase (145 aa).

Positions 137–138 match the Gly-cisPro motif, important for rejection of L-amino acids motif; it reads GP.

Belongs to the DTD family. Homodimer.

The protein localises to the cytoplasm. It carries out the reaction glycyl-tRNA(Ala) + H2O = tRNA(Ala) + glycine + H(+). It catalyses the reaction a D-aminoacyl-tRNA + H2O = a tRNA + a D-alpha-amino acid + H(+). In terms of biological role, an aminoacyl-tRNA editing enzyme that deacylates mischarged D-aminoacyl-tRNAs. Also deacylates mischarged glycyl-tRNA(Ala), protecting cells against glycine mischarging by AlaRS. Acts via tRNA-based rather than protein-based catalysis; rejects L-amino acids rather than detecting D-amino acids in the active site. By recycling D-aminoacyl-tRNA to D-amino acids and free tRNA molecules, this enzyme counteracts the toxicity associated with the formation of D-aminoacyl-tRNA entities in vivo and helps enforce protein L-homochirality. The polypeptide is D-aminoacyl-tRNA deacylase (Pseudomonas putida (strain ATCC 47054 / DSM 6125 / CFBP 8728 / NCIMB 11950 / KT2440)).